The chain runs to 104 residues: DNA-directed RNA polymerase subunit omega (104 aa).

Belongs to the RNA polymerase subunit omega family. The RNAP catalytic core consists of 2 alpha, 1 beta, 1 beta' and 1 omega subunit. When a sigma factor is associated with the core the holoenzyme is formed, which can initiate transcription.

It carries out the reaction RNA(n) + a ribonucleoside 5'-triphosphate = RNA(n+1) + diphosphate. Functionally, promotes RNA polymerase assembly. Latches the N- and C-terminal regions of the beta' subunit thereby facilitating its interaction with the beta and alpha subunits. The polypeptide is DNA-directed RNA polymerase subunit omega (Streptococcus thermophilus (strain CNRZ 1066)).